Consider the following 557-residue polypeptide: Formate--tetrahydrofolate ligase (557 aa).

66–73 contacts ATP; the sequence is TPAGEGKS.

This sequence belongs to the formate--tetrahydrofolate ligase family.

The catalysed reaction is (6S)-5,6,7,8-tetrahydrofolate + formate + ATP = (6R)-10-formyltetrahydrofolate + ADP + phosphate. It functions in the pathway one-carbon metabolism; tetrahydrofolate interconversion. This Clostridium botulinum (strain Loch Maree / Type A3) protein is Formate--tetrahydrofolate ligase.